The chain runs to 66 residues: U-limacoditoxin(59)-Dv128 (66 aa).

Positions 1-20 (MRHLLVLLLICLSVIAMAQA) are cleaved as a signal peptide. Positions 21-66 (TFGGGLGGAVGGRRRRDIGGGLGGAVGGRRRRDIGGGLGGAVGGKS) are 3 X 16 AA tandem repeats of [FI]-G-G-G-L-G-G-A-V-G-G-R-R-R-R-D. Repeat copies occupy residues 22–37 (FGGGLGGAVGGRRRRD) and 38–53 (IGGGLGGAVGGRRRRD). Glycine amide is present on G31. The propeptide occupies 33–37 (RRRRD). Position 47 is a glycine amide (G47). Residues 49 to 53 (RRRRD) constitute a propeptide that is removed on maturation. A 3; half-length repeat occupies 54 to 64 (IGGGLGGAVGG).

The protein belongs to the limacoditoxin-59 family. As to expression, expressed by the venom secretory cell of the spine. The spine is a cuticular structure containing a single large nucleated venom-secreting cell at its base. It is an independent unit capable of producing, storing and injecting venom. On the back of D.vulnerans caterpillars, spines are grouped together by 50 to 100 to form scoli, of which there are eight in D.vulnerans.

The protein localises to the secreted. Probable toxin. In Doratifera vulnerans (Mottled cup moth), this protein is U-limacoditoxin(59)-Dv128.